The following is a 362-amino-acid chain: S-adenosylmethionine:tRNA ribosyltransferase-isomerase (362 aa).

Belongs to the QueA family. As to quaternary structure, monomer.

The protein localises to the cytoplasm. It catalyses the reaction 7-aminomethyl-7-carbaguanosine(34) in tRNA + S-adenosyl-L-methionine = epoxyqueuosine(34) in tRNA + adenine + L-methionine + 2 H(+). It participates in tRNA modification; tRNA-queuosine biosynthesis. Functionally, transfers and isomerizes the ribose moiety from AdoMet to the 7-aminomethyl group of 7-deazaguanine (preQ1-tRNA) to give epoxyqueuosine (oQ-tRNA). This is S-adenosylmethionine:tRNA ribosyltransferase-isomerase from Methylobacterium sp. (strain 4-46).